The primary structure comprises 416 residues: Sarcosine oxidase subunit beta (416 aa).

Glycine 41, histidine 42, glutamate 63, asparagine 71, threonine 76, and isoleucine 78 together coordinate FAD. Residue histidine 182 is modified to Tele-8alpha-FMN histidine. The FAD site is built by valine 206, glycine 366, and lysine 368.

The protein belongs to the SoxB family. In terms of assembly, heterotetramer composed of subunits alpha (SoxA), beta (SoxB), gamma (SoxG) and delta (SoxD). FAD serves as cofactor. It depends on FMN as a cofactor.

It localises to the cytoplasm. The enzyme catalyses sarcosine + (6S)-5,6,7,8-tetrahydrofolate + O2 = (6R)-5,10-methylene-5,6,7,8-tetrahydrofolate + glycine + H2O2. The catalysed reaction is sarcosine + O2 + H2O = formaldehyde + glycine + H2O2. Its function is as follows. In the presence of tetrahydrofolate, catalyzes the oxidative demethylation of sarcosine to yield glycine, 5,10-methylenetetrahydrofolate and hydrogen peroxide. In the absence of tetrahydrofolate, catalyzes the oxidative demethylation of sarcosine to yield glycine, formaldehyde and hydrogen peroxide. This Rhizobium meliloti (strain 1021) (Ensifer meliloti) protein is Sarcosine oxidase subunit beta (soxB).